A 482-amino-acid chain; its full sequence is Cytochrome P450 monooxygenase pynD (482 aa).

The N-terminal stretch at 1 to 22 (MWRIPVIVALVAGLLYWVRKQG) is a signal peptide. N-linked (GlcNAc...) asparagine glycosylation is present at asparagine 401. Cysteine 417 contacts heme.

It belongs to the cytochrome P450 family. Requires heme as cofactor.

It functions in the pathway secondary metabolite biosynthesis. Functionally, cytochrome P450 monooxygenase; part of the gene cluster that mediates the biosynthesis of pyranonigrins, a family of antioxidative compounds. The first step of pyranonigrins biosynthesis is performed by the hybrid PKS-NRPS synthetase that condenses 6 malonyl-CoA units to an acetyl starter unit, to form a 1,3,5-trioxotetradecane-6,8-dienyl-ACP. The enoyl reductase (ER) domain of pynA is likely to be functional during the first two rounds of polyketide chain extension, to generate the saturated C-C bonds of the alkyl side chain. PynA subsequently forms the amide bond between the acyl chain and L-serine. Although pynA has a terminal reductase domain, it appears to require the thioesterase pynI for the release of the straight-chain intermediate from pynA via the formation of a tetramic acid pyranonigrin J. The methyltransferase pynC then coverts pyranonigrin J to pyranonigrin I via N-methylation. The FAD-dependent monooxygenase pynG catalyzes an epoxidation-mediated cyclization to form the dihydro-gamma-pyrone moiety, followed by pynD-catalyzed oxidation of the alcohol to the ketone and enolization to yield the characteristic tetramic acid-fused gamma-pyrone core of pyranonigrin H. Pyranonigrin H is substrate of pynH for dehydration-mediated exo-methylene formation from the serine side chain to produce pyranonigrin E, before the oxidase pynE reduces the exo-methylene of pyranonigrin E into a pendant methyl to form pyranonigrin G. The FAD-linked oxidoreductase pynB performs the reverse reaction and converts pyranonigrin G back to pyranonigrin E. This chain is Cytochrome P450 monooxygenase pynD, found in Aspergillus niger (strain ATCC MYA-4892 / CBS 513.88 / FGSC A1513).